The primary structure comprises 249 residues: Probable transcriptional regulatory protein ERGA_CDS_03720 (249 aa).

The tract at residues 1–21 (MAGHSQFANIKHRKGAQDAKR) is disordered.

The protein belongs to the TACO1 family.

It is found in the cytoplasm. This chain is Probable transcriptional regulatory protein ERGA_CDS_03720, found in Ehrlichia ruminantium (strain Gardel).